Here is a 355-residue protein sequence, read N- to C-terminus: 3-dehydroquinate synthase (355 aa).

Residues 71–76 (EGEASK), 105–109 (GVVGD), 129–130 (TS), Lys142, and Lys151 each bind NAD(+). Residues Glu184, His246, and His263 each contribute to the Zn(2+) site.

The protein belongs to the sugar phosphate cyclases superfamily. Dehydroquinate synthase family. Co(2+) is required as a cofactor. The cofactor is Zn(2+). Requires NAD(+) as cofactor.

Its subcellular location is the cytoplasm. The catalysed reaction is 7-phospho-2-dehydro-3-deoxy-D-arabino-heptonate = 3-dehydroquinate + phosphate. It functions in the pathway metabolic intermediate biosynthesis; chorismate biosynthesis; chorismate from D-erythrose 4-phosphate and phosphoenolpyruvate: step 2/7. Catalyzes the conversion of 3-deoxy-D-arabino-heptulosonate 7-phosphate (DAHP) to dehydroquinate (DHQ). The sequence is that of 3-dehydroquinate synthase from Streptococcus thermophilus (strain CNRZ 1066).